A 479-amino-acid chain; its full sequence is Ribosomal RNA small subunit methyltransferase F (479 aa).

S-adenosyl-L-methionine is bound by residues A125–K131, E149, D176, and D194. C247 serves as the catalytic Nucleophile.

The protein belongs to the class I-like SAM-binding methyltransferase superfamily. RsmB/NOP family.

It is found in the cytoplasm. It catalyses the reaction cytidine(1407) in 16S rRNA + S-adenosyl-L-methionine = 5-methylcytidine(1407) in 16S rRNA + S-adenosyl-L-homocysteine + H(+). In terms of biological role, specifically methylates the cytosine at position 1407 (m5C1407) of 16S rRNA. The polypeptide is Ribosomal RNA small subunit methyltransferase F (Escherichia coli O6:H1 (strain CFT073 / ATCC 700928 / UPEC)).